Here is a 247-residue protein sequence, read N- to C-terminus: Ribonuclease 3 (247 aa).

Positions 23 to 149 (HADLLERLGV…LLGAIFRQHG (127 aa)) constitute an RNase III domain. Glu62 provides a ligand contact to Mg(2+). Residue Asp66 is part of the active site. Positions 135 and 138 each coordinate Mg(2+). Glu138 is a catalytic residue. Positions 176-244 (DWKTTLQEEL…ARQAFLKLRE (69 aa)) constitute a DRBM domain.

It belongs to the ribonuclease III family. In terms of assembly, homodimer. The cofactor is Mg(2+).

It localises to the cytoplasm. The catalysed reaction is Endonucleolytic cleavage to 5'-phosphomonoester.. In terms of biological role, digests double-stranded RNA. Involved in the processing of primary rRNA transcript to yield the immediate precursors to the large and small rRNAs (23S and 16S). Processes some mRNAs, and tRNAs when they are encoded in the rRNA operon. Processes pre-crRNA and tracrRNA of type II CRISPR loci if present in the organism. The polypeptide is Ribonuclease 3 (Corynebacterium efficiens (strain DSM 44549 / YS-314 / AJ 12310 / JCM 11189 / NBRC 100395)).